Here is a 116-residue protein sequence, read N- to C-terminus: Iron-sulfur cluster insertion protein ErpA (116 aa).

3 residues coordinate iron-sulfur cluster: Cys-44, Cys-108, and Cys-110.

It belongs to the HesB/IscA family. In terms of assembly, homodimer. Requires iron-sulfur cluster as cofactor.

Required for insertion of 4Fe-4S clusters for at least IspG. This chain is Iron-sulfur cluster insertion protein ErpA, found in Pseudomonas fluorescens (strain ATCC BAA-477 / NRRL B-23932 / Pf-5).